The primary structure comprises 96 residues: Small ribosomal subunit protein bS18 (96 aa).

Residues Met-1–Lys-22 show a composition bias toward basic and acidic residues. Residues Met-1 to Pro-25 form a disordered region.

This sequence belongs to the bacterial ribosomal protein bS18 family. In terms of assembly, part of the 30S ribosomal subunit. Forms a tight heterodimer with protein bS6.

Its function is as follows. Binds as a heterodimer with protein bS6 to the central domain of the 16S rRNA, where it helps stabilize the platform of the 30S subunit. This Borrelia hermsii (strain HS1 / DAH) protein is Small ribosomal subunit protein bS18.